Reading from the N-terminus, the 64-residue chain is Large ribosomal subunit protein bL35 (64 aa).

Basic residues predominate over residues 38–53 (KRKANLNAPKHVHHTN). The disordered stretch occupies residues 38 to 64 (KRKANLNAPKHVHHTNAHSVMSLLCRA).

It belongs to the bacterial ribosomal protein bL35 family.

This chain is Large ribosomal subunit protein bL35, found in Helicobacter pylori (strain G27).